We begin with the raw amino-acid sequence, 248 residues long: 14-3-3-like protein G-BOX factor 14 kappa (248 aa).

S70, S112, and S193 each carry phosphoserine. Residue T214 is modified to Phosphothreonine.

The protein belongs to the 14-3-3 family. In terms of assembly, interacts with the isocitrate dehydrogenase IDH3, and malate dehydrogenases MDH1 and MDH2. Interacts with CINV1.

It localises to the nucleus. The protein resides in the cytoplasm. Is associated with a DNA binding complex that binds to the G box, a well-characterized cis-acting DNA regulatory element found in plant genes. Involved in the regulation of nutrient metabolism. Negative regulator of freezing tolerance that modulates cold-responsive C-repeat-binding factors (CBF) DREB1A AND DREB1B proteins stability by facilitating their ubiquitin-mediated degradation; this processus is counteracted by B1L. The polypeptide is 14-3-3-like protein G-BOX factor 14 kappa (Arabidopsis thaliana (Mouse-ear cress)).